A 293-amino-acid chain; its full sequence is uncharacterized protein (293 aa).

Residues 1–58 (MDLRRFITLKTVVEEGSFLRASQKLCCTQSTVTFHIQQLEQEFSVQLFEKIGRRMCLT) form the HTH lysR-type domain. Residues 18–37 (FLRASQKLCCTQSTVTFHIQ) constitute a DNA-binding region (H-T-H motif).

Belongs to the LysR transcriptional regulatory family.

This is an uncharacterized protein from Escherichia coli (strain K12).